We begin with the raw amino-acid sequence, 340 residues long: Protein AC11 (340 aa).

Plays an essential role in nucleocapsid egress from the host nucleus to form the budded virion (BV). Does not participate in nucleocapsid formation. In Autographa californica nuclear polyhedrosis virus (AcMNPV), this protein is Protein AC11.